A 31-amino-acid chain; its full sequence is Chassatide C6 (31 aa).

Residues 1-31 (GVIPCGESCVFIPCISSVIGCSCKNKVCYRN) constitute a cross-link (cyclopeptide (Gly-Asn)). 3 disulfides stabilise this stretch: C5–C21, C9–C23, and C14–C28.

This is a cyclic peptide. In terms of tissue distribution, expressed in fruit, pedicel, root and stem but not in leaf (at protein level).

Probably participates in a plant defense mechanism. In Chassalia chartacea (Chassalia curviflora), this protein is Chassatide C6.